The chain runs to 891 residues: 26S proteasome non-ATPase regulatory subunit 2 homolog B (891 aa).

The disordered stretch occupies residues 1–43 (MAPVPDPNSVGGGAKRDEATTKIPSKDSKKKDDKKEEDLSEED). Positions 14–37 (AKRDEATTKIPSKDSKKKDDKKEE) are enriched in basic and acidic residues. PC repeat units lie at residues 414–447 (SAVA…PVVA), 448–484 (GALL…SVRI), 485–519 (GAIM…PLDV), 522–556 (FAAL…AELG), 565–594 (LGLG…KIRK), 674–705 (LALG…EVAM), and 724–739 (AGML…KDAS).

This sequence belongs to the proteasome subunit S2 family. As to quaternary structure, component of the 19S regulatory particle (RP/PA700) base subcomplex of the 26S proteasome. The 26S proteasome is composed of a core protease (CP), known as the 20S proteasome, capped at one or both ends by the 19S regulatory particle (RP/PA700). The RP/PA700 complex is composed of at least 17 different subunits in two subcomplexes, the base and the lid, which form the portions proximal and distal to the 20S proteolytic core, respectively. Post-translationally, ubiquitinated. In terms of tissue distribution, expressed in stems, leaves, buds, flowers, siliques and developing seeds.

In terms of biological role, acts as a regulatory subunit of the 26 proteasome which is involved in the ATP-dependent degradation of ubiquitinated proteins. The polypeptide is 26S proteasome non-ATPase regulatory subunit 2 homolog B (RPN1B) (Arabidopsis thaliana (Mouse-ear cress)).